Consider the following 230-residue polypeptide: Methyltransferase aurB (230 aa).

This sequence belongs to the methyltransferase superfamily.

The protein operates within polyketide biosynthesis. Its function is as follows. Methyltransferase; part of the gene cluster that mediates the biosynthesis of aurovertins, fungal polyketides that exhibit potent inhibition of adenosine triphosphate synthase. Tha biosynthesis starts with the HR-PKS aurA that selects propionate as the starter unit; synthesizes a hexa-ene chain through the repeated functions of the KR and DH domains in the first six iterations; selectively introduces three alpha-methyl substitutions at C4, C6, and C16 using the S-adensylmethionine-dependent cMET; and shuts off KR and DH in the last three iterations to afford a 1,3,5-triketo portion that can undergo intramolecular cyclization to yield the alpha-pyrone intermediate. AurE may act as a cyclase and enhances the rate of pyrone formation and product release of aurA. The methyltransferase aurB then methylates the C17 hydroxyl group. C17 methylation is required to initiate epoxidation by the downstream monooxygenase aurC. The monooxygenase aurC and the epoxide hydrolase aurD can iteratively transform the terminal triene portion of the methylated precursor into the dioxabicyclo[3.2.1]octane scaffold of aurovertin E. Epoxidation modifications of the precursor occur in two separate steps; bis-epoxidation of the two terminal olefins takes place first, followed by another epoxidation that occurs at C7-C8 after tetrahydrofuran formation. The O-acyltransferase aurG converts aurovertin E to aurovertin A. The chain is Methyltransferase aurB from Calcarisporium arbuscula (Dendryphion arbuscula).